The sequence spans 375 residues: Queuine tRNA-ribosyltransferase (375 aa).

D89 acts as the Proton acceptor in catalysis. Residues 89-93 (DSGGF), D143, Q187, and G214 each bind substrate. The tract at residues 245-251 (GVGKPED) is RNA binding. D264 acts as the Nucleophile in catalysis. Residues 269-273 (TRNAR) are RNA binding; important for wobble base 34 recognition. Zn(2+) is bound by residues C302, C304, C307, and H333.

It belongs to the queuine tRNA-ribosyltransferase family. As to quaternary structure, homodimer. Within each dimer, one monomer is responsible for RNA recognition and catalysis, while the other monomer binds to the replacement base PreQ1. Zn(2+) serves as cofactor.

It catalyses the reaction 7-aminomethyl-7-carbaguanine + guanosine(34) in tRNA = 7-aminomethyl-7-carbaguanosine(34) in tRNA + guanine. It participates in tRNA modification; tRNA-queuosine biosynthesis. Its function is as follows. Catalyzes the base-exchange of a guanine (G) residue with the queuine precursor 7-aminomethyl-7-deazaguanine (PreQ1) at position 34 (anticodon wobble position) in tRNAs with GU(N) anticodons (tRNA-Asp, -Asn, -His and -Tyr). Catalysis occurs through a double-displacement mechanism. The nucleophile active site attacks the C1' of nucleotide 34 to detach the guanine base from the RNA, forming a covalent enzyme-RNA intermediate. The proton acceptor active site deprotonates the incoming PreQ1, allowing a nucleophilic attack on the C1' of the ribose to form the product. After dissociation, two additional enzymatic reactions on the tRNA convert PreQ1 to queuine (Q), resulting in the hypermodified nucleoside queuosine (7-(((4,5-cis-dihydroxy-2-cyclopenten-1-yl)amino)methyl)-7-deazaguanosine). This Aliivibrio fischeri (strain ATCC 700601 / ES114) (Vibrio fischeri) protein is Queuine tRNA-ribosyltransferase.